The chain runs to 89 residues: Small ribosomal subunit protein uS15 (89 aa).

It belongs to the universal ribosomal protein uS15 family. As to quaternary structure, part of the 30S ribosomal subunit. Forms a bridge to the 50S subunit in the 70S ribosome, contacting the 23S rRNA.

Functionally, one of the primary rRNA binding proteins, it binds directly to 16S rRNA where it helps nucleate assembly of the platform of the 30S subunit by binding and bridging several RNA helices of the 16S rRNA. In terms of biological role, forms an intersubunit bridge (bridge B4) with the 23S rRNA of the 50S subunit in the ribosome. The sequence is that of Small ribosomal subunit protein uS15 from Cupriavidus pinatubonensis (strain JMP 134 / LMG 1197) (Cupriavidus necator (strain JMP 134)).